The primary structure comprises 156 residues: Dihydrofolate reductase (156 aa).

Residues 1–156 form the DHFR domain; sequence MLKLIWCQTL…VNYYSNKKEK (156 aa).

The protein belongs to the dihydrofolate reductase family.

The enzyme catalyses (6S)-5,6,7,8-tetrahydrofolate + NADP(+) = 7,8-dihydrofolate + NADPH + H(+). It participates in cofactor biosynthesis; tetrahydrofolate biosynthesis; 5,6,7,8-tetrahydrofolate from 7,8-dihydrofolate: step 1/1. Functionally, key enzyme in folate metabolism. Catalyzes an essential reaction for de novo glycine and purine synthesis, and for DNA precursor synthesis. The protein is Dihydrofolate reductase (folA) of Ureaplasma parvum serovar 3 (strain ATCC 700970).